The following is a 282-amino-acid chain: 3-methyl-2-oxobutanoate hydroxymethyltransferase (282 aa).

Asp-45 and Asp-84 together coordinate Mg(2+). 3-methyl-2-oxobutanoate is bound by residues 45 to 46 (DS), Asp-84, and Lys-114. Glu-116 is a Mg(2+) binding site. Glu-183 acts as the Proton acceptor in catalysis.

Belongs to the PanB family. In terms of assembly, homodecamer; pentamer of dimers. The cofactor is Mg(2+).

The protein resides in the cytoplasm. The enzyme catalyses 3-methyl-2-oxobutanoate + (6R)-5,10-methylene-5,6,7,8-tetrahydrofolate + H2O = 2-dehydropantoate + (6S)-5,6,7,8-tetrahydrofolate. The protein operates within cofactor biosynthesis; (R)-pantothenate biosynthesis; (R)-pantoate from 3-methyl-2-oxobutanoate: step 1/2. In terms of biological role, catalyzes the reversible reaction in which hydroxymethyl group from 5,10-methylenetetrahydrofolate is transferred onto alpha-ketoisovalerate to form ketopantoate. This Syntrophobacter fumaroxidans (strain DSM 10017 / MPOB) protein is 3-methyl-2-oxobutanoate hydroxymethyltransferase.